Reading from the N-terminus, the 176-residue chain is Large ribosomal subunit protein bL17m (176 aa).

A mitochondrion-targeting transit peptide spans 1-8 (MRLSLAAA).

It belongs to the bacterial ribosomal protein bL17 family. As to quaternary structure, component of the mitochondrial ribosome large subunit (39S) which comprises a 16S rRNA and about 50 distinct proteins.

The protein localises to the mitochondrion. This Rattus norvegicus (Rat) protein is Large ribosomal subunit protein bL17m (Mrpl17).